Consider the following 187-residue polypeptide: MADQLSEEQIGEFREAFSLFDKDGDGSITTKELGTVMRSLGQNPTEAELQDMISEVDTDSNGNIEFKEFLGLMARKLRDKDSEEELKEAFRVFDKDQNGFISATELRHVMANIGERLTDEEVGEMISEADVDGDGQINYEEFVKCMMAKKRRKRIEEKRDHDGGSRTKSAGPSAAPASKRGQKCVIL.

Position 2 is an N-acetylalanine (Ala-2). 4 consecutive EF-hand domains span residues 8–43 (EQIG…LGQN), 44–79 (PTEA…KLRD), 81–116 (DSEE…IGER), and 117–152 (LTDE…KKRR). Ca(2+) contacts are provided by Asp-21, Asp-23, Asp-25, Ser-27, Glu-32, Asp-57, Asp-59, Asn-61, Asn-63, Glu-68, Asp-94, Asp-96, Asn-98, Glu-105, Asp-130, Asp-132, Asp-134, Gln-136, and Glu-141. The tract at residues 153 to 187 (KRIEEKRDHDGGSRTKSAGPSAAPASKRGQKCVIL) is disordered. A compositionally biased stretch (basic and acidic residues) spans 154 to 165 (RIEEKRDHDGGS). A compositionally biased stretch (low complexity) spans 169 to 178 (SAGPSAAPAS). Cys-184 is subject to Cysteine methyl ester. A lipid anchor (S-farnesyl cysteine) is attached at Cys-184. The propeptide at 185-187 (VIL) is removed in mature form.

This sequence belongs to the calmodulin family.

The protein localises to the membrane. Functionally, calcium-binding protein that binds and activates CAMK1, a calcium/calmodulin-dependent kinase. The polypeptide is Calmodulin-like protein 1 (CML1) (Oryza sativa subsp. japonica (Rice)).